The chain runs to 104 residues: Naphthalene 1,2-dioxygenase/salicylate 5-hydroxylase systems, ferredoxin component (104 aa).

The region spanning 6–101 is the Rieske domain; that stretch reads IDAACLDDIP…VKIENMRVML (96 aa). Residues Cys45, His47, Cys64, and His67 each contribute to the [2Fe-2S] cluster site.

This sequence belongs to the bacterial ring-hydroxylating dioxygenase ferredoxin component family. As to quaternary structure, ferredoxin NagAb belongs to both the salicylate 5-hydroxylase (S5H) and the naphthalene 1,2-dioxygenase (NDO) multicomponent enzyme systems. The NDO multicomponent enzyme system is composed of an electron transfer component and a dioxygenase component (iron sulfur protein (ISP)). The electron transfer component is composed of a ferredoxin reductase (NagAa) and a ferredoxin (NagAb), and the dioxygenase component is formed by a large alpha subunit (NagAc) and a small beta subunit (NagAd). The S5H multicomponent enzyme system is composed of an electron transfer component and a monooxygenase component. The electron transfer component is composed of a ferredoxin reductase (NagAa) and a ferredoxin (NagAb), and the monooxygenase component is formed by a large subunit (NagG) and a small subunit (NagH). Requires [2Fe-2S] cluster as cofactor.

Its pathway is aromatic compound metabolism; naphthalene degradation. Functionally, component of two multicomponent enzyme systems which are involved in the catabolism of naphthalene. Plays a role as an electron transfer component for both salicylate 5-hydroxylase (S5H) and naphthalene 1,2-dioxygenase (NDO) systems, by transferring electrons to the oxygenase components. This is Naphthalene 1,2-dioxygenase/salicylate 5-hydroxylase systems, ferredoxin component from Ralstonia sp.